We begin with the raw amino-acid sequence, 130 residues long: Cytochrome c-type biogenesis protein CcmE (130 aa).

The Cytoplasmic portion of the chain corresponds to 1-7 (MKKKHKR). A helical; Signal-anchor for type II membrane protein membrane pass occupies residues 8–28 (LLITSGIFCFLSCAVFFILTT). Topologically, residues 29–130 (LKENISFFYT…DENYKPKVLK (102 aa)) are extracellular. The heme site is built by His-120 and Tyr-124.

Belongs to the CcmE/CycJ family.

The protein resides in the cell membrane. Its function is as follows. Heme chaperone required for the biogenesis of c-type cytochromes. Transiently binds heme delivered by CcmC and transfers the heme to apo-cytochromes in a process facilitated by CcmF and CcmH. The polypeptide is Cytochrome c-type biogenesis protein CcmE (Wolbachia pipientis subsp. Culex pipiens (strain wPip)).